The chain runs to 317 residues: Methionyl-tRNA formyltransferase (317 aa).

Residue 112-115 coordinates (6S)-5,6,7,8-tetrahydrofolate; it reads SLLP.

It belongs to the Fmt family.

It catalyses the reaction L-methionyl-tRNA(fMet) + (6R)-10-formyltetrahydrofolate = N-formyl-L-methionyl-tRNA(fMet) + (6S)-5,6,7,8-tetrahydrofolate + H(+). In terms of biological role, attaches a formyl group to the free amino group of methionyl-tRNA(fMet). The formyl group appears to play a dual role in the initiator identity of N-formylmethionyl-tRNA by promoting its recognition by IF2 and preventing the misappropriation of this tRNA by the elongation apparatus. The sequence is that of Methionyl-tRNA formyltransferase from Mycoplasma mycoides subsp. mycoides SC (strain CCUG 32753 / NCTC 10114 / PG1).